The chain runs to 288 residues: Nucleotide-binding protein Tola_2941 (288 aa).

ATP is bound at residue Gly-8–Thr-15. Asp-56–Asn-59 contributes to the GTP binding site.

The protein belongs to the RapZ-like family.

In terms of biological role, displays ATPase and GTPase activities. This Tolumonas auensis (strain DSM 9187 / NBRC 110442 / TA 4) protein is Nucleotide-binding protein Tola_2941.